We begin with the raw amino-acid sequence, 432 residues long: Thiol-specific monooxygenase (432 aa).

Residues 13–17 (GGGPG) and 46–47 (VW) contribute to the FAD site. Residue 65 to 66 (TN) participates in NADP(+) binding. Position 117–118 (117–118 (EV)) interacts with FAD. 199 to 202 (SGQD) contacts NADP(+).

It belongs to the FMO family. Monomer. The cofactor is FAD.

Flavin-dependent oxidation of thiol-containing compounds. Probably required for the correct folding of disulfide-bonded proteins. The protein is Thiol-specific monooxygenase (FMO1) of Saccharomyces cerevisiae (strain ATCC 204508 / S288c) (Baker's yeast).